Reading from the N-terminus, the 81-residue chain is MAELNKAIDKLTYKLAMNYPYTADIAEKLIELGLIRQEKWLKAINDTKRFKDKILDKRNSNNKIEKSENTGENHDNNQDQK.

The disordered stretch occupies residues 55–81 (LDKRNSNNKIEKSENTGENHDNNQDQK).

This is an uncharacterized protein from Thermoproteus tenax virus 1 (strain KRA1) (TTV1).